Here is a 628-residue protein sequence, read N- to C-terminus: Very-long-chain aldehyde decarbonylase GL1-2 (628 aa).

5 consecutive transmembrane segments (helical) span residues 37–57 (GAAP…ARGL), 131–151 (GWAI…YWAH), 191–211 (VVIG…VGLV), 299–319 (DFVF…PFVL), and 331–351 (FVLL…WCCS). The region spanning 137–277 (LLHVLVAEPL…MPIFDLLGGT (141 aa)) is the Fatty acid hydroxylase domain.

Belongs to the sterol desaturase family. In terms of assembly, homodimer. As to expression, expressed in germinating seeds, radicals and leaves.

The protein resides in the endoplasmic reticulum membrane. It catalyses the reaction a long-chain fatty aldehyde + 2 NADPH + O2 + H(+) = a long-chain alkane + formate + 2 NADP(+) + H2O. In terms of biological role, aldehyde decarbonylase involved in the conversion of aldehydes to alkanes. Core component of a very-long-chain alkane synthesis complex. Required for the formation of wax layers conferring cuticular permeability and drought tolerance. This chain is Very-long-chain aldehyde decarbonylase GL1-2, found in Oryza sativa subsp. japonica (Rice).